A 125-amino-acid polypeptide reads, in one-letter code: UPF0738 protein GTNG_0708 (125 aa).

Belongs to the UPF0738 family.

This chain is UPF0738 protein GTNG_0708, found in Geobacillus thermodenitrificans (strain NG80-2).